The following is a 450-amino-acid chain: MKTVTEFQNKNILVLGIAKSGYAAATLLQKLGANVIVNDGKPLAENVLAAELQAKGMDVVCGGHPLELLERNISLVVKNPGIPYSNPILVAAKEKQIPIVTEVELAYRISEAPFVGITGSNGKTTTTMLTFEMLKEGQKHPVIAGNIGTVACEVAQDAKENEVVVTELSSFQLMGVELFQPKIAAFLNLFEAHLDYHGTKKEYGLAKANIFKNQTENDYSVINADDADVMALSAYSKGQKVLFSTTKEIEDGACIKDNALYFKAEKVVEVDDIVLPGQHNLENILAAMSIAKLLGVSNEAITAVLKRFTGVKHRLEYVTTINNRKFYNDSKATNMLATEKALSAFTQPTVLLAGGLDRGNEFDDLIPYFKNVKAIVTFGQTAPKLVRAAEKAGLETIESVDTLDEAVVKAYAHSTDGDVILLSPACASWDQFKTFEERGDIFIQAVHKLI.

An ATP-binding site is contributed by Gly119–Thr125.

The protein belongs to the MurCDEF family.

It localises to the cytoplasm. It catalyses the reaction UDP-N-acetyl-alpha-D-muramoyl-L-alanine + D-glutamate + ATP = UDP-N-acetyl-alpha-D-muramoyl-L-alanyl-D-glutamate + ADP + phosphate + H(+). It functions in the pathway cell wall biogenesis; peptidoglycan biosynthesis. Its function is as follows. Cell wall formation. Catalyzes the addition of glutamate to the nucleotide precursor UDP-N-acetylmuramoyl-L-alanine (UMA). This Bacillus thuringiensis (strain Al Hakam) protein is UDP-N-acetylmuramoylalanine--D-glutamate ligase.